A 962-amino-acid chain; its full sequence is Exportin-T (962 aa).

M1 is modified (N-acetylmethionine). Position 634 is an N6-acetyllysine (K634).

Found in a complex with XPOT, Ran and tRNA. Probably found in a complex with nucleoporins. Interacts with Ran and tRNA in a GTP-dependent manner.

It localises to the nucleus. Its subcellular location is the cytoplasm. In terms of biological role, mediates the nuclear export of aminoacylated tRNAs. In the nucleus binds to tRNA and to the GTPase Ran in its active GTP-bound form. Docking of this trimeric complex to the nuclear pore complex (NPC) is mediated through binding to nucleoporins. Upon transit of a nuclear export complex into the cytoplasm, disassembling of the complex and hydrolysis of Ran-GTP to Ran-GDP (induced by RANBP1 and RANGAP1, respectively) cause release of the tRNA from the export receptor. XPOT then return to the nuclear compartment and mediate another round of transport. The directionality of nuclear export is thought to be conferred by an asymmetric distribution of the GTP- and GDP-bound forms of Ran between the cytoplasm and nucleus. The chain is Exportin-T (XPOT) from Pongo abelii (Sumatran orangutan).